A 194-amino-acid polypeptide reads, in one-letter code: 22 kDa relaxation protein (194 aa).

This protein is probably required for relaxation complex formation. In Salmonella typhimurium, this protein is 22 kDa relaxation protein.